Reading from the N-terminus, the 572-residue chain is Glypican-5 (572 aa).

A signal peptide spans 1–24 (MDARTWRLGWRCLLLLALLGSTRS). Asn-120 and Asn-237 each carry an N-linked (GlcNAc...) asparagine glycan. An O-linked (Xyl...) (glycosaminoglycan) serine glycan is attached at Ser-486. A glycan (N-linked (GlcNAc...) asparagine) is linked at Asn-493. O-linked (Xyl...) (glycosaminoglycan) serine glycans are attached at residues Ser-495, Ser-507, and Ser-509. Asn-527 carries N-linked (GlcNAc...) asparagine glycosylation.

It belongs to the glypican family.

The protein resides in the cell membrane. The protein localises to the secreted. It is found in the extracellular space. In terms of biological role, cell surface proteoglycan that bears heparan sulfate. The protein is Glypican-5 (Gpc5) of Mus musculus (Mouse).